The sequence spans 251 residues: Probable transcriptional regulatory protein Mflv_3828 (251 aa).

The protein belongs to the TACO1 family.

The protein localises to the cytoplasm. In Mycolicibacterium gilvum (strain PYR-GCK) (Mycobacterium gilvum (strain PYR-GCK)), this protein is Probable transcriptional regulatory protein Mflv_3828.